Reading from the N-terminus, the 430-residue chain is Gamma-glutamyl phosphate reductase (430 aa).

It belongs to the gamma-glutamyl phosphate reductase family.

Its subcellular location is the cytoplasm. The enzyme catalyses L-glutamate 5-semialdehyde + phosphate + NADP(+) = L-glutamyl 5-phosphate + NADPH + H(+). It functions in the pathway amino-acid biosynthesis; L-proline biosynthesis; L-glutamate 5-semialdehyde from L-glutamate: step 2/2. In terms of biological role, catalyzes the NADPH-dependent reduction of L-glutamate 5-phosphate into L-glutamate 5-semialdehyde and phosphate. The product spontaneously undergoes cyclization to form 1-pyrroline-5-carboxylate. The polypeptide is Gamma-glutamyl phosphate reductase (Rhodopseudomonas palustris (strain BisB5)).